A 323-amino-acid polypeptide reads, in one-letter code: Sphingolipid delta(4)-desaturase DES1 (323 aa).

The N-myristoyl glycine moiety is linked to residue Gly-2. 2 helical membrane-spanning segments follow: residues 41–61 (SNLI…FYLV) and 68–88 (WVLF…TLAI). The Histidine box-1 signature appears at 89–93 (HEVSH). The helical transmembrane segment at 102-122 (AMWNRWFGIFANLPIGVPYSV) threads the bilayer. The Histidine box-2 motif lies at 128-132 (HMDHH). 3 consecutive transmembrane segments (helical) span residues 152-172 (FFCT…FYAF), 184-204 (YLEI…YYVL), and 209-229 (LVYM…SGHF). A Histidine box-3 motif is present at residues 259–263 (HNEHH). Ser-307 is modified (phosphoserine).

It belongs to the fatty acid desaturase type 1 family. DEGS subfamily. As to quaternary structure, interacts with RLBP1; the interaction increases synthesis of chromophore-precursors by DEGS1. In terms of processing, myristoylation can target the enzyme to the mitochondria leading to an increase in ceramide levels.

The protein localises to the mitochondrion membrane. It is found in the endoplasmic reticulum membrane. It catalyses the reaction an N-acylsphinganine + 2 Fe(II)-[cytochrome b5] + O2 + 2 H(+) = an N-acylsphing-4-enine + 2 Fe(III)-[cytochrome b5] + 2 H2O. It carries out the reaction all-trans-retinol = 11-cis-retinol. The catalysed reaction is all-trans-retinol = 9-cis-retinol. The enzyme catalyses all-trans-retinol = 13-cis-retinol. It catalyses the reaction 11-cis-retinol = 13-cis-retinol. It carries out the reaction 11-cis-retinol = 9-cis-retinol. Its function is as follows. Has sphingolipid-delta-4-desaturase activity. Converts D-erythro-sphinganine to D-erythro-sphingosine (E-sphing-4-enine). Catalyzes the equilibrium isomerization of retinols. This is Sphingolipid delta(4)-desaturase DES1 (DEGS1) from Bos taurus (Bovine).